The primary structure comprises 126 residues: Histone H2B type 1-N (126 aa).

A compositionally biased stretch (low complexity) spans 1-12 (MPEPSKSAPAPK). The tract at residues 1 to 36 (MPEPSKSAPAPKKGSKKAVTKAQKKDGKKRKRSRKE) is disordered. An N-acetylproline modification is found at Pro-2. Glu-3 is subject to ADP-ribosyl glutamic acid. The residue at position 6 (Lys-6) is an N6-(2-hydroxyisobutyryl)lysine; alternate. The residue at position 6 (Lys-6) is an N6-(beta-hydroxybutyryl)lysine; alternate. Lys-6 is subject to N6-acetyllysine; alternate. Lys-6 bears the N6-butyryllysine; alternate mark. N6-crotonyllysine; alternate is present on Lys-6. Lys-6 is subject to N6-lactoyllysine; alternate. Lys-6 is covalently cross-linked (Glycyl lysine isopeptide (Lys-Gly) (interchain with G-Cter in SUMO2); alternate). Position 7 is an ADP-ribosylserine (Ser-7). Residue Lys-12 is modified to N6-(beta-hydroxybutyryl)lysine; alternate. 2 positions are modified to N6-acetyllysine; alternate: Lys-12 and Lys-13. N6-crotonyllysine; alternate is present on residues Lys-12 and Lys-13. At Lys-12 the chain carries N6-lactoyllysine; alternate. Lys-13 is subject to N6-(2-hydroxyisobutyryl)lysine; alternate. Ser-15 bears the Phosphoserine; by STK4/MST1 mark. N6-acetyllysine; alternate is present on residues Lys-16, Lys-17, Lys-21, and Lys-24. An N6-crotonyllysine; alternate mark is found at Lys-16, Lys-17, Lys-21, and Lys-24. 4 positions are modified to N6-lactoyllysine; alternate: Lys-16, Lys-17, Lys-21, and Lys-24. The residue at position 17 (Lys-17) is an N6-glutaryllysine; alternate. Residues Lys-21 and Lys-24 each carry the N6-(2-hydroxyisobutyryl)lysine; alternate modification. Lys-21 bears the N6-(beta-hydroxybutyryl)lysine; alternate mark. Residue Lys-21 is modified to N6-butyryllysine; alternate. A Glycyl lysine isopeptide (Lys-Gly) (interchain with G-Cter in SUMO2); alternate cross-link involves residue Lys-21. N6-(2-hydroxyisobutyryl)lysine is present on Lys-25. Position 35 is an N6-(2-hydroxyisobutyryl)lysine; alternate (Lys-35). The residue at position 35 (Lys-35) is an N6-(beta-hydroxybutyryl)lysine; alternate. Lys-35 is subject to N6-crotonyllysine; alternate. N6-glutaryllysine; alternate is present on Lys-35. Lys-35 bears the N6-succinyllysine; alternate mark. Lys-35 participates in a covalent cross-link: Glycyl lysine isopeptide (Lys-Gly) (interchain with G-Cter in ubiquitin); alternate. Glu-36 is modified (polyADP-ribosyl glutamic acid). Ser-37 bears the Phosphoserine; by AMPK mark. N6-(2-hydroxyisobutyryl)lysine; alternate occurs at positions 44, 47, and 58. Lys-44 is subject to N6-lactoyllysine; alternate. 2 positions are modified to N6-glutaryllysine; alternate: Lys-44 and Lys-47. Lys-47 is subject to N6-methyllysine; alternate. Residue Lys-58 is modified to N6,N6-dimethyllysine; alternate. Arg-80 is subject to Dimethylated arginine. Lys-86 carries the post-translational modification N6-(2-hydroxyisobutyryl)lysine; alternate. The residue at position 86 (Lys-86) is an N6-acetyllysine; alternate. The residue at position 86 (Lys-86) is an N6-lactoyllysine; alternate. Lys-86 is subject to N6,N6,N6-trimethyllysine; alternate. Omega-N-methylarginine is present on residues Arg-87 and Arg-93. Lys-109 carries the post-translational modification N6-(2-hydroxyisobutyryl)lysine; alternate. Residue Lys-109 is modified to N6-lactoyllysine; alternate. At Lys-109 the chain carries N6-glutaryllysine; alternate. Lys-109 carries the N6-methyllysine; alternate modification. Ser-113 carries an O-linked (GlcNAc) serine glycan. Thr-116 is modified (phosphothreonine). An N6-(2-hydroxyisobutyryl)lysine; alternate mark is found at Lys-117 and Lys-121. N6-(beta-hydroxybutyryl)lysine; alternate is present on Lys-117. An N6-lactoyllysine; alternate mark is found at Lys-117 and Lys-121. N6-glutaryllysine; alternate is present on residues Lys-117 and Lys-121. N6-succinyllysine; alternate occurs at positions 117 and 121. N6-methylated lysine; alternate is present on Lys-117. Lys-121 participates in a covalent cross-link: Glycyl lysine isopeptide (Lys-Gly) (interchain with G-Cter in ubiquitin); alternate.

This sequence belongs to the histone H2B family. The nucleosome is a histone octamer containing two molecules each of H2A, H2B, H3 and H4 assembled in one H3-H4 heterotetramer and two H2A-H2B heterodimers. The octamer wraps approximately 147 bp of DNA. Monoubiquitination at Lys-35 (H2BK34Ub) by the MSL1/MSL2 dimer is required for histone H3 'Lys-4' (H3K4me) and 'Lys-79' (H3K79me) methylation and transcription activation at specific gene loci, such as HOXA9 and MEIS1 loci. Similarly, monoubiquitination at Lys-121 (H2BK120Ub) by the RNF20/40 complex gives a specific tag for epigenetic transcriptional activation and is also prerequisite for histone H3 'Lys-4' and 'Lys-79' methylation. It also functions cooperatively with the FACT dimer to stimulate elongation by RNA polymerase II. H2BK120Ub also acts as a regulator of mRNA splicing: deubiquitination by USP49 is required for efficient cotranscriptional splicing of a large set of exons. In terms of processing, phosphorylated on Ser-15 (H2BS14ph) by STK4/MST1 during apoptosis; which facilitates apoptotic chromatin condensation. Also phosphorylated on Ser-15 in response to DNA double strand breaks (DSBs), and in correlation with somatic hypermutation and immunoglobulin class-switch recombination. Phosphorylation at Ser-37 (H2BS36ph) by AMPK in response to stress promotes transcription. Post-translationally, glcNAcylation at Ser-113 promotes monoubiquitination of Lys-121. It fluctuates in response to extracellular glucose, and associates with transcribed genes. ADP-ribosylated by PARP1 or PARP2 on Ser-7 (H2BS6ADPr) in response to DNA damage. H2BS6ADPr promotes recruitment of CHD1L. Mono-ADP-ribosylated on Glu-3 (H2BE2ADPr) by PARP3 in response to single-strand breaks. Poly ADP-ribosylation on Glu-36 (H2BE35ADPr) by PARP1 regulates adipogenesis: it inhibits phosphorylation at Ser-37 (H2BS36ph), thereby blocking expression of pro-adipogenetic genes. In terms of processing, crotonylation (Kcr) is specifically present in male germ cells and marks testis-specific genes in post-meiotic cells, including X-linked genes that escape sex chromosome inactivation in haploid cells. Crotonylation marks active promoters and enhancers and confers resistance to transcriptional repressors. It is also associated with post-meiotically activated genes on autosomes. Post-translationally, lactylated in macrophages by EP300/P300 by using lactoyl-CoA directly derived from endogenous or exogenous lactate, leading to stimulates gene transcription.

The protein localises to the nucleus. Its subcellular location is the chromosome. Core component of nucleosome. Nucleosomes wrap and compact DNA into chromatin, limiting DNA accessibility to the cellular machineries which require DNA as a template. Histones thereby play a central role in transcription regulation, DNA repair, DNA replication and chromosomal stability. DNA accessibility is regulated via a complex set of post-translational modifications of histones, also called histone code, and nucleosome remodeling. The chain is Histone H2B type 1-N (H2BC15) from Bos taurus (Bovine).